Consider the following 907-residue polypeptide: Protein translocase subunit SecA (907 aa).

ATP contacts are provided by residues Gln87, Gly105–Thr109, and Asp512. Residues Gln834–Ile907 form a disordered region. 2 stretches are compositionally biased toward basic and acidic residues: residues Asp836–Arg853 and Glu873–Arg888. The Zn(2+) site is built by Cys892, Cys894, Cys903, and His904. Basic residues predominate over residues Lys898–Ile907.

The protein belongs to the SecA family. As to quaternary structure, monomer and homodimer. Part of the essential Sec protein translocation apparatus which comprises SecA, SecYEG and auxiliary proteins SecDF-YajC and YidC. Zn(2+) serves as cofactor.

Its subcellular location is the cell inner membrane. The protein localises to the cytoplasm. The catalysed reaction is ATP + H2O + cellular proteinSide 1 = ADP + phosphate + cellular proteinSide 2.. In terms of biological role, part of the Sec protein translocase complex. Interacts with the SecYEG preprotein conducting channel. Has a central role in coupling the hydrolysis of ATP to the transfer of proteins into and across the cell membrane, serving both as a receptor for the preprotein-SecB complex and as an ATP-driven molecular motor driving the stepwise translocation of polypeptide chains across the membrane. In Aliivibrio fischeri (strain ATCC 700601 / ES114) (Vibrio fischeri), this protein is Protein translocase subunit SecA.